The primary structure comprises 386 residues: 8-amino-7-oxononanoate synthase (386 aa).

Arg31 serves as a coordination point for substrate. 109-110 (GY) lines the pyridoxal 5'-phosphate pocket. His134 contributes to the substrate binding site. Residues Ser180, 205 to 208 (DEAH), and 236 to 239 (TLSK) contribute to the pyridoxal 5'-phosphate site. Position 239 is an N6-(pyridoxal phosphate)lysine (Lys239). Residue Thr349 coordinates substrate.

This sequence belongs to the class-II pyridoxal-phosphate-dependent aminotransferase family. BioF subfamily. As to quaternary structure, homodimer. Requires pyridoxal 5'-phosphate as cofactor.

The enzyme catalyses 6-carboxyhexanoyl-[ACP] + L-alanine + H(+) = (8S)-8-amino-7-oxononanoate + holo-[ACP] + CO2. It functions in the pathway cofactor biosynthesis; biotin biosynthesis. Its function is as follows. Catalyzes the decarboxylative condensation of pimeloyl-[acyl-carrier protein] and L-alanine to produce 8-amino-7-oxononanoate (AON), [acyl-carrier protein], and carbon dioxide. The sequence is that of 8-amino-7-oxononanoate synthase from Mycobacterium bovis (strain ATCC BAA-935 / AF2122/97).